The following is an 89-amino-acid chain: MSITAERKAALIKEYATAEGDTGSPEVQVAILTERINNLTEHFKDHKKDNHSRRGLLTMVSSRRSLLDYLKKKDEGRYSKLINSLGIRR.

This sequence belongs to the universal ribosomal protein uS15 family. As to quaternary structure, part of the 30S ribosomal subunit. Forms a bridge to the 50S subunit in the 70S ribosome, contacting the 23S rRNA.

In terms of biological role, one of the primary rRNA binding proteins, it binds directly to 16S rRNA where it helps nucleate assembly of the platform of the 30S subunit by binding and bridging several RNA helices of the 16S rRNA. Functionally, forms an intersubunit bridge (bridge B4) with the 23S rRNA of the 50S subunit in the ribosome. The chain is Small ribosomal subunit protein uS15 from Rhizobium etli (strain CIAT 652).